Reading from the N-terminus, the 286-residue chain is Pantothenate synthetase (286 aa).

30-37 lines the ATP pocket; that stretch reads MGNLHDGH. The active-site Proton donor is the His37. Gln61 contributes to the (R)-pantoate binding site. Gln61 is a binding site for beta-alanine. 149 to 152 is an ATP binding site; sequence GEKD. Gln155 provides a ligand contact to (R)-pantoate. Residues Val178 and 186–189 each bind ATP; that span reads LSSR.

It belongs to the pantothenate synthetase family. As to quaternary structure, homodimer.

The protein localises to the cytoplasm. It catalyses the reaction (R)-pantoate + beta-alanine + ATP = (R)-pantothenate + AMP + diphosphate + H(+). It participates in cofactor biosynthesis; (R)-pantothenate biosynthesis; (R)-pantothenate from (R)-pantoate and beta-alanine: step 1/1. In terms of biological role, catalyzes the condensation of pantoate with beta-alanine in an ATP-dependent reaction via a pantoyl-adenylate intermediate. The chain is Pantothenate synthetase from Edwardsiella ictaluri (strain 93-146).